The following is a 248-amino-acid chain: 2-acetamido-2-deoxy-D-galactose-binding seed lectin 2 (248 aa).

Asn119 carries an N-linked (GlcNAc...) asparagine; partial glycan. Positions 128 and 130 each coordinate Mn(2+). Asp130, Tyr132, Asn134, and Asp138 together coordinate Ca(2+). Mn(2+) is bound by residues Asp138 and His144.

Belongs to the leguminous lectin family.

In Cytisus scoparius (Scotch broom), this protein is 2-acetamido-2-deoxy-D-galactose-binding seed lectin 2.